A 128-amino-acid chain; its full sequence is Small ribosomal subunit protein eS8 (128 aa).

Belongs to the eukaryotic ribosomal protein eS8 family. As to quaternary structure, part of the 30S ribosomal subunit.

This Methanococcus vannielii (strain ATCC 35089 / DSM 1224 / JCM 13029 / OCM 148 / SB) protein is Small ribosomal subunit protein eS8.